A 389-amino-acid polypeptide reads, in one-letter code: Na(+)/H(+) antiporter NhaA (389 aa).

The next 11 membrane-spanning stretches (helical) occupy residues 17 to 37, 59 to 79, 95 to 115, 124 to 144, 154 to 174, 177 to 197, 213 to 233, 261 to 281, 287 to 307, 328 to 348, and 363 to 383; these read ILLLVAVVLAMLMANSPLAGL, LLLWINDGLMALFFLLIGLEV, SLPTFAAIGGMLVPAGIYLLF, VGWAIPAATDIAFALGIMALL, VFLLALAIIDDLGVIVIIALF, SDLSTISLIIASIAIVGLVAL, LVLWVAVLKSGVHATLAGVII, FLILPVFAFANAGVALGNMSL, PVPVGIALGLMLGKPIGVMLF, IAPVAAMCGIGFTMSMFIASL, and LGTLIGSILAALIGYFWLSKV.

This sequence belongs to the NhaA Na(+)/H(+) (TC 2.A.33) antiporter family.

Its subcellular location is the cell inner membrane. The enzyme catalyses Na(+)(in) + 2 H(+)(out) = Na(+)(out) + 2 H(+)(in). Functionally, na(+)/H(+) antiporter that extrudes sodium in exchange for external protons. The chain is Na(+)/H(+) antiporter NhaA from Shewanella sp. (strain ANA-3).